Here is a 1061-residue protein sequence, read N- to C-terminus: Isoleucine--tRNA ligase (1061 aa).

The 'HIGH' region motif lies at Pro-50–Thr-60. The short motif at Lys-604–Ser-608 is the 'KMSKS' region element. Residue Lys-607 participates in ATP binding.

This sequence belongs to the class-I aminoacyl-tRNA synthetase family. IleS type 2 subfamily. In terms of assembly, monomer. The cofactor is Zn(2+).

The protein resides in the cytoplasm. The catalysed reaction is tRNA(Ile) + L-isoleucine + ATP = L-isoleucyl-tRNA(Ile) + AMP + diphosphate. Its function is as follows. Catalyzes the attachment of isoleucine to tRNA(Ile). As IleRS can inadvertently accommodate and process structurally similar amino acids such as valine, to avoid such errors it has two additional distinct tRNA(Ile)-dependent editing activities. One activity is designated as 'pretransfer' editing and involves the hydrolysis of activated Val-AMP. The other activity is designated 'posttransfer' editing and involves deacylation of mischarged Val-tRNA(Ile). The sequence is that of Isoleucine--tRNA ligase from Natronomonas pharaonis (strain ATCC 35678 / DSM 2160 / CIP 103997 / JCM 8858 / NBRC 14720 / NCIMB 2260 / Gabara) (Halobacterium pharaonis).